Consider the following 366-residue polypeptide: Chalcone synthase B (366 aa).

Residue Cys172 is part of the active site.

The protein belongs to the thiolase-like superfamily. Chalcone/stilbene synthases family.

It carries out the reaction (E)-4-coumaroyl-CoA + 3 malonyl-CoA + 3 H(+) = 2',4,4',6'-tetrahydroxychalcone + 3 CO2 + 4 CoA. It functions in the pathway secondary metabolite biosynthesis; flavonoid biosynthesis. In terms of biological role, the primary product of this enzyme is 4,2',4',6'-tetrahydroxychalcone (also termed naringenin-chalcone or chalcone) which can under specific conditions spontaneously isomerize into naringenin. This chain is Chalcone synthase B (CHSB), found in Ipomoea trifida (Morning glory).